We begin with the raw amino-acid sequence, 212 residues long: 3-isopropylmalate dehydratase small subunit (212 aa).

This sequence belongs to the LeuD family. LeuD type 1 subfamily. Heterodimer of LeuC and LeuD.

It carries out the reaction (2R,3S)-3-isopropylmalate = (2S)-2-isopropylmalate. It functions in the pathway amino-acid biosynthesis; L-leucine biosynthesis; L-leucine from 3-methyl-2-oxobutanoate: step 2/4. Its function is as follows. Catalyzes the isomerization between 2-isopropylmalate and 3-isopropylmalate, via the formation of 2-isopropylmaleate. The protein is 3-isopropylmalate dehydratase small subunit of Nitrosomonas eutropha (strain DSM 101675 / C91 / Nm57).